The chain runs to 474 residues: Aspartyl/glutamyl-tRNA(Asn/Gln) amidotransferase subunit B (474 aa).

This sequence belongs to the GatB/GatE family. GatB subfamily. Heterotrimer of A, B and C subunits.

The enzyme catalyses L-glutamyl-tRNA(Gln) + L-glutamine + ATP + H2O = L-glutaminyl-tRNA(Gln) + L-glutamate + ADP + phosphate + H(+). It carries out the reaction L-aspartyl-tRNA(Asn) + L-glutamine + ATP + H2O = L-asparaginyl-tRNA(Asn) + L-glutamate + ADP + phosphate + 2 H(+). Allows the formation of correctly charged Asn-tRNA(Asn) or Gln-tRNA(Gln) through the transamidation of misacylated Asp-tRNA(Asn) or Glu-tRNA(Gln) in organisms which lack either or both of asparaginyl-tRNA or glutaminyl-tRNA synthetases. The reaction takes place in the presence of glutamine and ATP through an activated phospho-Asp-tRNA(Asn) or phospho-Glu-tRNA(Gln). This Persephonella marina (strain DSM 14350 / EX-H1) protein is Aspartyl/glutamyl-tRNA(Asn/Gln) amidotransferase subunit B.